A 304-amino-acid polypeptide reads, in one-letter code: Myelin basic protein (304 aa).

Basic and acidic residues-rich tracts occupy residues Met-1–Ala-12 and Asn-22–Leu-32. Residues Met-1 to Ser-146 form a disordered region. At Gly-2 the chain carries N-acetylalanine. The span at Ala-51–Thr-65 shows a compositional bias: polar residues. Positions Phe-95–Glu-113 are enriched in basic and acidic residues. Ser-96 bears the Phosphoserine mark. Positions Leu-117–Ser-130 are enriched in polar residues. Ser-141 and Ser-146 each carry phosphoserine. The residue at position 148 (Tyr-148) is a Phosphotyrosine. Thr-151 bears the Phosphothreonine mark. Position 153 is a phosphoserine (Ser-153). Position 154 is a phosphothreonine (Thr-154). Citrulline; in form C8 is present on residues Arg-159 and Arg-165. Arg-167 is modified (citrulline). Thr-169 is modified (phosphothreonine). Position 174 is a phosphoserine (Ser-174). 2 positions are modified to omega-N-methylarginine: Arg-177 and Arg-183. The tract at residues Phe-179–His-222 is induces experimental autoimmune encephalomyelitis (EAE) 1. Residues Gly-180 to Ser-249 form a disordered region. Position 190 is a phosphoserine (Ser-190). A Citrulline modification is found at Arg-199. Residue Tyr-203 is modified to Phosphotyrosine. Residue Ser-210 is modified to Phosphoserine. Phosphothreonine is present on residues Thr-214 and Thr-229. A Citrulline modification is found at Arg-231. At Thr-232 the chain carries Phosphothreonine. Residue Gln-237 is modified to Deamidated glutamine. The residue at position 241 (Arg-241) is an Omega-N-methylarginine; alternate. Arg-241 is modified (symmetric dimethylarginine; alternate). Residues Ser-246–Arg-256 form an induces experimental autoimmune encephalomyelitis (EAE) 2 region. A Phosphoserine modification is found at Ser-249. Citrulline; in form C8 is present on residues Arg-256 and Arg-264. Deamidated glutamine is present on Gln-281. Position 293 is a citrulline; in form C8 (Arg-293). Ser-295 is subject to Phosphoserine. Residue Arg-296 is modified to Citrulline. Ser-299 carries the post-translational modification Phosphoserine; by UHMK1. Arg-303 bears the Citrulline mark. Arg-304 carries the citrulline; in form C8 modification.

Belongs to the myelin basic protein family. In terms of assembly, homodimer. Isoform 3 exists as a homodimer. Several charge isomers of MBP; C1 (the most cationic, least modified, and most abundant form), C2, C3, C4, C5, C6, C7, C8-A and C8-B (the least cationic form); are produced as a result of optional PTM, such as phosphorylation, deamidation of glutamine or asparagine, arginine citrullination and methylation. C8-A and C8-B contain each two mass isoforms termed C8-A(H), C8-A(L), C8-B(H) and C8-B(L), (H) standing for higher and (L) for lower molecular weight. C3, C4 and C5 are phosphorylated. The ratio of methylated arginine residues decreases during aging, making the protein more cationic. In terms of processing, the N-terminal alanine is acetylated (isoform 3, isoform 4, isoform 5 and isoform 6). Post-translationally, arg-241 was found to be 6% monomethylated and 60% symmetrically dimethylated. Proteolytically cleaved in B cell lysosomes by cathepsin CTSG which degrades the major immunogenic MBP epitope and prevents the activation of MBP-specific autoreactive T cells. In terms of processing, phosphorylated by TAOK2, VRK2, MAPK11, MAPK12, MAPK14 and MINK1. In terms of tissue distribution, MBP isoforms are found in both the central and the peripheral nervous system, whereas Golli-MBP isoforms are expressed in fetal thymus, spleen and spinal cord, as well as in cell lines derived from the immune system.

Its subcellular location is the myelin membrane. The protein resides in the nucleus. In terms of biological role, the classic group of MBP isoforms (isoform 4-isoform 14) are with PLP the most abundant protein components of the myelin membrane in the CNS. They have a role in both its formation and stabilization. The smaller isoforms might have an important role in remyelination of denuded axons in multiple sclerosis. The non-classic group of MBP isoforms (isoform 1-isoform 3/Golli-MBPs) may preferentially have a role in the early developing brain long before myelination, maybe as components of transcriptional complexes, and may also be involved in signaling pathways in T-cells and neural cells. Differential splicing events combined with optional post-translational modifications give a wide spectrum of isomers, with each of them potentially having a specialized function. Induces T-cell proliferation. In Homo sapiens (Human), this protein is Myelin basic protein (MBP).